The chain runs to 146 residues: UPF0178 protein CTC_02403 (146 aa).

This sequence belongs to the UPF0178 family.

This is UPF0178 protein CTC_02403 from Clostridium tetani (strain Massachusetts / E88).